Consider the following 278-residue polypeptide: Indole-3-glycerol phosphate synthase (278 aa).

This sequence belongs to the TrpC family.

It carries out the reaction 1-(2-carboxyphenylamino)-1-deoxy-D-ribulose 5-phosphate + H(+) = (1S,2R)-1-C-(indol-3-yl)glycerol 3-phosphate + CO2 + H2O. The protein operates within amino-acid biosynthesis; L-tryptophan biosynthesis; L-tryptophan from chorismate: step 4/5. The polypeptide is Indole-3-glycerol phosphate synthase (Pseudomonas aeruginosa (strain LESB58)).